A 181-amino-acid polypeptide reads, in one-letter code: Large ribosomal subunit protein uL5c (181 aa).

It belongs to the universal ribosomal protein uL5 family. In terms of assembly, part of the 50S ribosomal subunit; contacts the 5S rRNA.

The protein localises to the plastid. It localises to the chloroplast. In terms of biological role, binds 5S rRNA, forms part of the central protuberance of the 50S subunit. The polypeptide is Large ribosomal subunit protein uL5c (rpl5) (Rhodomonas salina (Cryptomonas salina)).